A 182-amino-acid chain; its full sequence is Adenine phosphoribosyltransferase (182 aa).

It belongs to the purine/pyrimidine phosphoribosyltransferase family. In terms of assembly, homodimer.

The protein localises to the cytoplasm. The enzyme catalyses AMP + diphosphate = 5-phospho-alpha-D-ribose 1-diphosphate + adenine. The protein operates within purine metabolism; AMP biosynthesis via salvage pathway; AMP from adenine: step 1/1. Its function is as follows. Catalyzes a salvage reaction resulting in the formation of AMP, that is energically less costly than de novo synthesis. This chain is Adenine phosphoribosyltransferase, found in Koribacter versatilis (strain Ellin345).